The sequence spans 378 residues: MDPGKPRKNVLVVALLVIFQVCFCQDEVTDDYIGENTTVDYTLYESVCFKKDVRNFKAWFLPLMYSVICFVGLLGNGLVILTYIYFKRLKTMTDTYLLNLAVADILFLLILPFWAYSEAKSWIFGVYLCKGIFGIYKLSFFSGMLLLLCISIDRYVAIVQAVSAHRHRARVLLISKLSCVGIWMLALFLSIPELLYSGLQKNSGEDTLRCSLVSAQVEALITIQVAQMVFGFLVPMLAMSFCYLIIIRTLLQARNFERNKAIKVIIAVVVVFIVFQLPYNGVVLAQTVANFNITNSSCETSKQLNIAYDVTYSLASVRCCVNPFLYAFIGVKFRSDLFKLFKDLGCLSQERLRHWSSCRHVRNASVSMEAETTTTFSP.

Residues 1–24 (MDPGKPRKNVLVVALLVIFQVCFC) form the signal peptide. Over 25 to 59 (QDEVTDDYIGENTTVDYTLYESVCFKKDVRNFKAW) the chain is Extracellular. An N-linked (GlcNAc...) asparagine glycan is attached at N36. A helical transmembrane segment spans residues 60–86 (FLPLMYSVICFVGLLGNGLVILTYIYF). Residues 87-95 (KRLKTMTDT) lie on the Cytoplasmic side of the membrane. Residues 96–116 (YLLNLAVADILFLLILPFWAY) form a helical membrane-spanning segment. At 117–130 (SEAKSWIFGVYLCK) the chain is on the extracellular side. A disulfide bond links C129 and C210. The chain crosses the membrane as a helical span at residues 131–152 (GIFGIYKLSFFSGMLLLLCISI). The Cytoplasmic portion of the chain corresponds to 153-170 (DRYVAIVQAVSAHRHRAR). The chain crosses the membrane as a helical span at residues 171 to 191 (VLLISKLSCVGIWMLALFLSI). The Extracellular portion of the chain corresponds to 192–219 (PELLYSGLQKNSGEDTLRCSLVSAQVEA). The chain crosses the membrane as a helical span at residues 220 to 247 (LITIQVAQMVFGFLVPMLAMSFCYLIII). Over 248–263 (RTLLQARNFERNKAIK) the chain is Cytoplasmic. A helical transmembrane segment spans residues 264-289 (VIIAVVVVFIVFQLPYNGVVLAQTVA). At 290–313 (NFNITNSSCETSKQLNIAYDVTYS) the chain is on the extracellular side. The chain crosses the membrane as a helical span at residues 314–331 (LASVRCCVNPFLYAFIGV). At 332–378 (KFRSDLFKLFKDLGCLSQERLRHWSSCRHVRNASVSMEAETTTTFSP) the chain is on the cytoplasmic side.

This sequence belongs to the G-protein coupled receptor 1 family.

The protein localises to the cell membrane. In terms of biological role, receptor for the MIP-3-beta chemokine. This is C-C chemokine receptor type 7 (Ccr7) from Mus musculus (Mouse).